A 295-amino-acid polypeptide reads, in one-letter code: Ankyrin repeat and SOCS box protein 17 (295 aa).

An ANK repeat occupies 146-176 (SGITPLFYVAQTRQSNIFKILLQYGILEREK). The SOCS box domain occupies 232–295 (LGRRPIISNW…RLQNYLNLEI (64 aa)).

It belongs to the ankyrin SOCS box (ASB) family.

It functions in the pathway protein modification; protein ubiquitination. May be a substrate-recognition component of a SCF-like ECS (Elongin-Cullin-SOCS-box protein) E3 ubiquitin-protein ligase complex which mediates the ubiquitination and subsequent proteasomal degradation of target proteins. The sequence is that of Ankyrin repeat and SOCS box protein 17 (ASB17) from Macaca fascicularis (Crab-eating macaque).